Here is a 305-residue protein sequence, read N- to C-terminus: Acetaldehyde dehydrogenase 5 (305 aa).

NAD(+) is bound at residue 11–14 (SGNI). The active-site Acyl-thioester intermediate is the Cys-130. Residues 161-169 (SIGPGTRAN) and Asn-272 each bind NAD(+).

This sequence belongs to the acetaldehyde dehydrogenase family.

The catalysed reaction is acetaldehyde + NAD(+) + CoA = acetyl-CoA + NADH + H(+). This is Acetaldehyde dehydrogenase 5 from Dechloromonas aromatica (strain RCB).